We begin with the raw amino-acid sequence, 182 residues long: NADH-quinone oxidoreductase subunit B (182 aa).

Positions 47, 48, 113, and 142 each coordinate [4Fe-4S] cluster.

It belongs to the complex I 20 kDa subunit family. As to quaternary structure, NDH-1 is composed of 14 different subunits. Subunits NuoB, C, D, E, F, and G constitute the peripheral sector of the complex. The cofactor is [4Fe-4S] cluster.

Its subcellular location is the cell inner membrane. It catalyses the reaction a quinone + NADH + 5 H(+)(in) = a quinol + NAD(+) + 4 H(+)(out). Its function is as follows. NDH-1 shuttles electrons from NADH, via FMN and iron-sulfur (Fe-S) centers, to quinones in the respiratory chain. The immediate electron acceptor for the enzyme in this species is believed to be ubiquinone. Couples the redox reaction to proton translocation (for every two electrons transferred, four hydrogen ions are translocated across the cytoplasmic membrane), and thus conserves the redox energy in a proton gradient. The protein is NADH-quinone oxidoreductase subunit B of Anaeromyxobacter dehalogenans (strain 2CP-1 / ATCC BAA-258).